Reading from the N-terminus, the 231-residue chain is Probable septum site-determining protein MinC (231 aa).

It belongs to the MinC family. Interacts with MinD and FtsZ.

In terms of biological role, cell division inhibitor that blocks the formation of polar Z ring septums. Rapidly oscillates between the poles of the cell to destabilize FtsZ filaments that have formed before they mature into polar Z rings. Prevents FtsZ polymerization. The chain is Probable septum site-determining protein MinC from Bradyrhizobium diazoefficiens (strain JCM 10833 / BCRC 13528 / IAM 13628 / NBRC 14792 / USDA 110).